We begin with the raw amino-acid sequence, 239 residues long: Small ribosomal subunit protein uS2 (239 aa).

The protein belongs to the universal ribosomal protein uS2 family.

In Prochlorococcus marinus (strain MIT 9303), this protein is Small ribosomal subunit protein uS2.